A 225-amino-acid chain; its full sequence is Cytidylate kinase (225 aa).

ATP is bound at residue 12–20; it reads GPSGAGKGT.

Belongs to the cytidylate kinase family. Type 1 subfamily.

The protein resides in the cytoplasm. The catalysed reaction is CMP + ATP = CDP + ADP. The enzyme catalyses dCMP + ATP = dCDP + ADP. The sequence is that of Cytidylate kinase from Proteus mirabilis (strain HI4320).